The following is a 154-amino-acid chain: Prefoldin subunit 5 (154 aa).

Ala2 bears the N-acetylalanine mark. Lys42 carries the post-translational modification N6-acetyllysine. Ser56 carries the phosphoserine modification.

The protein belongs to the prefoldin subunit alpha family. In terms of assembly, heterohexamer of two PFD-alpha type and four PFD-beta type subunits. Binds to MYC; interacts with its N-terminal domain. Highly expressed in pancreas and skeletal muscle and moderately in other tissues.

It localises to the nucleus. Its subcellular location is the cytoplasm. Functionally, binds specifically to cytosolic chaperonin (c-CPN) and transfers target proteins to it. Binds to nascent polypeptide chain and promotes folding in an environment in which there are many competing pathways for nonnative proteins. Represses the transcriptional activity of MYC. The polypeptide is Prefoldin subunit 5 (PFDN5) (Homo sapiens (Human)).